Consider the following 357-residue polypeptide: Chorismate synthase (357 aa).

Arginine 48 lines the NADP(+) pocket. FMN is bound by residues 125 to 127 (RSS), 238 to 239 (NA), glycine 282, 297 to 301 (KPTSS), and arginine 323.

Belongs to the chorismate synthase family. As to quaternary structure, homotetramer. FMNH2 is required as a cofactor.

It carries out the reaction 5-O-(1-carboxyvinyl)-3-phosphoshikimate = chorismate + phosphate. The protein operates within metabolic intermediate biosynthesis; chorismate biosynthesis; chorismate from D-erythrose 4-phosphate and phosphoenolpyruvate: step 7/7. In terms of biological role, catalyzes the anti-1,4-elimination of the C-3 phosphate and the C-6 proR hydrogen from 5-enolpyruvylshikimate-3-phosphate (EPSP) to yield chorismate, which is the branch point compound that serves as the starting substrate for the three terminal pathways of aromatic amino acid biosynthesis. This reaction introduces a second double bond into the aromatic ring system. In Gluconacetobacter diazotrophicus (strain ATCC 49037 / DSM 5601 / CCUG 37298 / CIP 103539 / LMG 7603 / PAl5), this protein is Chorismate synthase.